Here is a 161-residue protein sequence, read N- to C-terminus: MYLNATILGQVIAFILFVWFCMKYVWNPLMSVIEERQKKIIDSLESIKTSKMESERIRNEALACLKQAHIKSEEIIKYAYECKMQILHTAQNEAYQERDKILSQTQIQIDQERERIISELRNHVSKLVIESTEKVIDTSINKIIDYDFVDKIIKQLSNYED.

The helical transmembrane segment at 1–21 (MYLNATILGQVIAFILFVWFC) threads the bilayer.

Belongs to the ATPase B chain family. F-type ATPases have 2 components, F(1) - the catalytic core - and F(0) - the membrane proton channel. F(1) has five subunits: alpha(3), beta(3), gamma(1), delta(1), epsilon(1). F(0) has three main subunits: a(1), b(2) and c(10-14). The alpha and beta chains form an alternating ring which encloses part of the gamma chain. F(1) is attached to F(0) by a central stalk formed by the gamma and epsilon chains, while a peripheral stalk is formed by the delta and b chains.

The protein resides in the cell inner membrane. Functionally, f(1)F(0) ATP synthase produces ATP from ADP in the presence of a proton or sodium gradient. F-type ATPases consist of two structural domains, F(1) containing the extramembraneous catalytic core and F(0) containing the membrane proton channel, linked together by a central stalk and a peripheral stalk. During catalysis, ATP synthesis in the catalytic domain of F(1) is coupled via a rotary mechanism of the central stalk subunits to proton translocation. Component of the F(0) channel, it forms part of the peripheral stalk, linking F(1) to F(0). The chain is ATP synthase subunit b from Blochmanniella floridana.